Consider the following 131-residue polypeptide: Profilin-8 (131 aa).

The cysteines at positions 13 and 115 are disulfide-linked. The Involved in PIP2 interaction motif lies at 81-97; that stretch reads AVIRGKKGSGGITVKKT. The residue at position 111 (threonine 111) is a Phosphothreonine.

This sequence belongs to the profilin family. Occurs in many kinds of cells as a complex with monomeric actin in a 1:1 ratio. Phosphorylated by MAP kinases.

It localises to the cytoplasm. Its subcellular location is the cytoskeleton. Binds to actin and affects the structure of the cytoskeleton. At high concentrations, profilin prevents the polymerization of actin, whereas it enhances it at low concentrations. The protein is Profilin-8 of Zea mays (Maize).